The primary structure comprises 1052 residues: MASAAVTPKLGWVQHQVTNGLHAVVGQVCRHPIHTLLVTALIAATTYLHVLEGTFRAANLGPGSKTDAAPFDVQSFLWGSRSLRLGETSSWRWQVGDLSEATGDGQVNHHWALVTLSFPGASVDDRSPAFLWNALPDSVGAEPITPTSNFFTSISNEFSLAFRVPYTQLSDFLEAVEFVASDKEDRSWAIRFPHGEGKPISLGRWLGNSWLSFLHRAKHAETVDMAIIGLGYLALNMTLVSLFRAMRQLGSRFWLAASVLLSGAFAFVFGLGVTTACGVPVDMLLLSEGIPFLVLTVGFEKPIRFTRAVLYASNQLRRGLQQRDVADKHDSRQRHMIPNAMLFAINREGWSIVQSYLLEIGALALGAVFRPRERFGQFCFLAAWMVLFDAILLFTFYATILCVKLEVTRMQNPGTLDLADDQHGPRIFGYKVNPTSLARWKLIMVGGFVLFNVLQLSSFFYRIMGGFMTNAALTPTTVSPFKVAANGLNDIYLAARAGGVETWVTVLPPIRYVMEASGLEMSAGRRPVFDGVLAGLESPLGRLCLMGALVFSLYLNNHLIPAARWHFSPGAPKESAAPAPPSSPASVPSAVPVPAPSSRSFEEIEALFKANQAESLTDDELAELCLRGKIAGYSLEKTLESIASAGSSSTATTRLEAFTRAVRIRRAAVSRTPSTRDLSGGIQESLLPYRNYNYELVHGACCENVIGYLPLPLGLAGPMVIDGQAYFIPMATTEGVLVASASRGCKAINTGGGAVTMLKGDGMTRGPCLGFPSAKRAAEAQRWVESPVGHQVLTDAFNATSRFARLQTLTVAQAGTYLYIRFRTTTGDAMGMNMISKGVEKALQAMTAHGFPDMNTITLSGNFCADKKSAAINWIGGRGKSVIAEATIPADTVRKVLKTDIDALVELNTAKNLVGSAMAGSMGGFNAHASNLVQAVFLATGQDPAQNVESSSCITTMKKIDGNLHIAVSMPSMEVGTIGGGTILEAQGAMLDLLGVRGAHPTDPGANARRLARIVAAAVLAGELSTCSALAAGHLVNAHMRHNRSAASSEKK.

A run of 6 helical transmembrane segments spans residues 223–243 (VDMA…VSLF), 253–273 (FWLA…GLGV), 279–299 (VPVD…TVGF), 349–369 (GWSI…GAVF), 378–398 (FCFL…TFYA), and 440–460 (WKLI…SSFF). Residues 224–403 (DMAIIGLGYL…FTFYATILCV (180 aa)) form the SSD domain. Positions 461–617 (YRIMGGFMTN…FKANQAESLT (157 aa)) are linker. The interval 571–594 (APKESAAPAPPSSPASVPSAVPVP) is disordered. Positions 584-594 (PASVPSAVPVP) are enriched in low complexity. The catalytic stretch occupies residues 618-1044 (DDELAELCLR…LVNAHMRHNR (427 aa)). E734 functions as the Charge relay system in the catalytic mechanism. N798 carries an N-linked (GlcNAc...) asparagine glycan. Active-site charge relay system residues include K867 and D943. H1039 functions as the Proton donor in the catalytic mechanism. An N-linked (GlcNAc...) asparagine glycan is attached at N1043.

Belongs to the HMG-CoA reductase family.

It localises to the endoplasmic reticulum membrane. It catalyses the reaction (R)-mevalonate + 2 NADP(+) + CoA = (3S)-3-hydroxy-3-methylglutaryl-CoA + 2 NADPH + 2 H(+). Its pathway is polyketide biosynthesis; lovastatin biosynthesis. HMG-CoA reductase; part of the gene cluster that mediates the biosynthesis of monakolin K, also known as lovastatin, and which acts as a potent competitive inhibitor of HMG-CoA reductase. Monakolin K biosynthesis is performed in two stages. The first stage is catalyzed by the nonaketide synthase mokA, which belongs to type I polyketide synthases and catalyzes the iterative nine-step formation of the polyketide. This PKS stage is completed by the action of dehydrogenase mokE, which catalyzes the NADPH-dependent reduction of the unsaturated tetra-, penta- and heptaketide intermediates that arise during the mokA-mediated biosynthesis of the nonaketide chain and leads to dihydromonacolin L. Covalently bound dihydromonacolin L is released from mokA by the mokD esterase. Conversion of dihydromonacolin L into monacolin L and then monacolin J is subsequently performed with the participation of molecular oxygen and P450 monoogygenase mokC. Finally, mokF performs the conversion of monacoline J to monacoline K through the addition of the side-chain diketide moiety (2R)-2-methylbutanoate produced by the diketide synthase mokB. HMG-CoA reductase mokG may act as a down-regulator of monacolin K production. The chain is 3-hydroxy-3-methylglutaryl coenzyme A reductase mokG from Monascus pilosus (Red mold).